Here is a 71-residue protein sequence, read N- to C-terminus: Protein SlyX homolog (71 aa).

It belongs to the SlyX family.

The chain is Protein SlyX homolog from Azotobacter vinelandii (strain DJ / ATCC BAA-1303).